Consider the following 55-residue polypeptide: Large ribosomal subunit protein bL33 (55 aa).

This sequence belongs to the bacterial ribosomal protein bL33 family.

The sequence is that of Large ribosomal subunit protein bL33 from Agrobacterium fabrum (strain C58 / ATCC 33970) (Agrobacterium tumefaciens (strain C58)).